Consider the following 790-residue polypeptide: cAMP and cAMP-inhibited cGMP 3',5'-cyclic phosphodiesterase 10A (790 aa).

Residues 290 to 291, 334 to 335, Thr368, Gln387, and His519 each bind 3',5'-cyclic AMP; these read RC and IA. Positions 446–763 constitute a PDEase domain; sequence TSEEWQGLMR…NQWEKVIRGE (318 aa). His519 (proton donor) is an active-site residue. His519 lines the 3',5'-cyclic GMP pocket. A divalent metal cation contacts are provided by His523, His557, Asp558, and Asp668. Position 720 (Gln720) interacts with 3',5'-cyclic AMP. Position 720 (Gln720) interacts with 3',5'-cyclic GMP. The disordered stretch occupies residues 768–790; it reads WISGPGPAPSKSTPEKLNVKVED. A compositionally biased stretch (basic and acidic residues) spans 780–790; it reads TPEKLNVKVED.

Belongs to the cyclic nucleotide phosphodiesterase family. In terms of assembly, homodimer. The cofactor is a divalent metal cation. In terms of tissue distribution, detected in striatum (at protein level). Detected in testis and brain.

It localises to the cytoplasm. It is found in the cytosol. It catalyses the reaction a nucleoside 3',5'-cyclic phosphate + H2O = a nucleoside 5'-phosphate + H(+). The catalysed reaction is 3',5'-cyclic AMP + H2O = AMP + H(+). It carries out the reaction 3',5'-cyclic GMP + H2O = GMP + H(+). It functions in the pathway purine metabolism; 3',5'-cyclic AMP degradation; AMP from 3',5'-cyclic AMP: step 1/1. It participates in purine metabolism; 3',5'-cyclic GMP degradation; GMP from 3',5'-cyclic GMP: step 1/1. Its function is as follows. Plays a role in signal transduction by regulating the intracellular concentration of cyclic nucleotides. Can hydrolyze both cAMP and cGMP, but has higher affinity for cAMP and is more efficient with cAMP as substrate. May play a critical role in regulating cAMP and cGMP levels in the striatum, a region of the brain that contributes to the control of movement and cognition. The sequence is that of cAMP and cAMP-inhibited cGMP 3',5'-cyclic phosphodiesterase 10A (Pde10a) from Mus musculus (Mouse).